Reading from the N-terminus, the 721-residue chain is Dolichyl-diphosphooligosaccharide--protein glycosyltransferase subunit STT3B (721 aa).

Topologically, residues 1-25 (MAAATALDSLPAPLRSLRLKTKQQE) are cytoplasmic. The chain crosses the membrane as a helical span at residues 26–46 (LLLRVSALALIYVLAFVVRLF). Topologically, residues 47 to 129 (SVLRYESMIH…VHIREVCVLT (83 aa)) are lumenal. A DXD motif 1 motif is present at residues 57-59 (EFD). Asp59 serves as a coordination point for Mn(2+). Residues 130 to 148 (APFFAANTTLVAYAFGREI) form a helical membrane-spanning segment. The Cytoplasmic portion of the chain corresponds to 149-150 (WD). A helical membrane pass occupies residues 151 to 168 (SGAGLVAAALIAVCPGYI). Over 169–179 (SRSVAGSYDNE) the chain is Lumenal. Positions 177 and 179 each coordinate Mn(2+). The DXD motif 2 motif lies at 177-179 (DNE). Residues 180-199 (GVAIFALLLTFYLFVRAVNT) traverse the membrane as a helical segment. Over 200-201 (GS) the chain is Cytoplasmic. Residues 202-216 (LAWSLASAFGYFYMV) traverse the membrane as a helical segment. At 217–221 (SAWGG) the chain is on the lumenal side. A helical transmembrane segment spans residues 222-238 (YVFIINLLPLYVLVLLV). Topologically, residues 239-243 (TGRYS) are cytoplasmic. Residues 244–269 (QRLYVAYNSTYVLGMLLAMQIRFVGF) form a helical membrane-spanning segment. Topologically, residues 270–277 (QHVQSGEH) are lumenal. A helical transmembrane segment spans residues 278–297 (MAAMGVFFLLQVFFFLDWVK). Over 298 to 313 (YLLNDAKLFKSFLRIT) the chain is Cytoplasmic. The chain crosses the membrane as a helical span at residues 314–334 (LTCVITVGTLALGIGTASGYI). Topologically, residues 335-367 (SPWTGRFYSLLDPTYAKDHIPIIASVSEHQPTA) are lumenal. An SVSE motif motif is present at residues 359-362 (SVSE). Residues 368-390 (WSSFMFDFHILLFLFPAGLYFCF) form a helical membrane-spanning segment. Residues 391–396 (KRLSDA) are Cytoplasmic-facing. Residues 397-413 (TIFIVMYGLTSMYFAGV) form a helical membrane-spanning segment. Residues 414 to 417 (MVRL) are Lumenal-facing. Arg416 lines the dolichyl diphosphooligosaccharide pocket. The chain crosses the membrane as a helical span at residues 418-439 (ILVAAPAVCLISAIAASATIKN). Residues 440–471 (LTTLIRTKSKSPQTVSGKSSGSKAAAKGAVDQ) are Cytoplasmic-facing. A helical membrane pass occupies residues 472-492 (SLPFQQNVAIALLLGAFYLLS). Residues 493-721 (RYAVHCTWVT…YKVKPPKNRS (229 aa)) are Lumenal-facing. The tract at residues 548 to 550 (WWD) is interacts with target acceptor peptide in protein substrate. The WWDYG motif motif lies at 548-552 (WWDYG). Tyr553 lines the dolichyl diphosphooligosaccharide pocket. Residues Asn560 and Asn567 are each glycosylated (N-linked (GlcNAc...) asparagine). N-linked (GlcNAc...) (high mannose) asparagine glycosylation is present at Asn571. Positions 615–622 (DINKFLWM) match the DK motif motif.

Belongs to the STT3 family. In terms of assembly, component of the oligosaccharyltransferase (OST) complex. Mg(2+) is required as a cofactor. Mn(2+) serves as cofactor.

The protein localises to the endoplasmic reticulum membrane. The enzyme catalyses a di-trans,poly-cis-dolichyl diphosphooligosaccharide + L-asparaginyl-[protein] = N(4)-(oligosaccharide-(1-&gt;4)-N-acetyl-beta-D-glucosaminyl-(1-&gt;4)-N-acetyl-beta-D-glucosaminyl)-L-asparaginyl-[protein] + a di-trans,poly-cis-dolichyl diphosphate + H(+). The protein operates within protein modification; protein glycosylation. Catalytic subunit of the oligosaccharyl transferase (OST) complex that catalyzes the initial transfer of a defined glycan (Glc(3)Man(9)GlcNAc(2) in eukaryotes) from the lipid carrier dolichol-pyrophosphate to an asparagine residue within an Asn-X-Ser/Thr consensus motif in nascent polypeptide chains, the first step in protein N-glycosylation. N-glycosylation occurs cotranslationally and the complex associates with the Sec61 complex at the channel-forming translocon complex that mediates protein translocation across the endoplasmic reticulum (ER). All subunits are required for a maximal enzyme activity. This subunit contains the active site and the acceptor peptide and donor lipid-linked oligosaccharide (LLO) binding pockets. This Oryza sativa subsp. japonica (Rice) protein is Dolichyl-diphosphooligosaccharide--protein glycosyltransferase subunit STT3B (STT3B).